We begin with the raw amino-acid sequence, 208 residues long: Small ribosomal subunit protein uS4 (208 aa).

The region spanning 98–163 (QRLDNVVYRM…NPQITRAIEL (66 aa)) is the S4 RNA-binding domain.

It belongs to the universal ribosomal protein uS4 family. As to quaternary structure, part of the 30S ribosomal subunit. Contacts protein S5. The interaction surface between S4 and S5 is involved in control of translational fidelity.

In terms of biological role, one of the primary rRNA binding proteins, it binds directly to 16S rRNA where it nucleates assembly of the body of the 30S subunit. With S5 and S12 plays an important role in translational accuracy. The polypeptide is Small ribosomal subunit protein uS4 (Campylobacter jejuni subsp. jejuni serotype O:6 (strain 81116 / NCTC 11828)).